The following is a 270-amino-acid chain: Transcription factor PU.1 (270 aa).

The interval 123 to 164 is disordered; that stretch reads SLSPAQPSSDEEEGERQSPPLEVSDGEADGLEPGPGLLPGET. Phosphoserine occurs at positions 140 and 146. Residues 153 to 164 are compositionally biased toward low complexity; it reads LEPGPGLLPGET. Residues 170 to 253 constitute a DNA-binding region (ETS); it reads IRLYQFLLDL…VKKKLTYQFS (84 aa). 4 residues coordinate DNA: Lys217, Arg230, Arg233, and Lys243.

Belongs to the ETS family. In terms of assembly, binds DNA as a monomer. Can form homomers. Directly interacts with CEBPD/NF-IL6-beta; this interaction does not affect DNA-binding properties of each partner. Interacts with NONO/p54(nrb). Interacts with RUNX1/AML1. Interacts with GFI1; the interaction represses SPI1 transcriptional activity, hence blocks SPI1-induced macrophage differentiation of myeloid progenitor cells. Interacts with CEBPE. Interacts with IRF4/Pip and IRF8. Interacts with JUN. Interacts with RB1. Interacts with TBP. In the bone marrow, concentrated in hematopoietic stem cell, lymphoid progenitor, myeloid lineage (granulocyte macrophage progenitors, classical dendritic cells, monocytes) and B-cell clusters. Among B-cells, predominantly expressed in pre-B1 cells. Expressed in germinal center B-cells.

It localises to the nucleus. Transcriptional activity at macrophage-specific genes is inhibited by interaction with GFI1, which results in the inhibition of SPI1-induced macrophage differentiation of myeloid progenitor cells, but not that of the granulocyte lineage. Its function is as follows. Pioneer transcription factor, which controls hematopoietic cell fate by decompacting stem cell heterochromatin and allowing other transcription factors to enter otherwise inaccessible genomic sites. Once in open chromatin, can directly control gene expression by binding genetic regulatory elements and can also more broadly influence transcription by recruiting transcription factors, such as interferon regulatory factors (IRFs), to otherwise inaccessible genomic regions. Transcriptionally activates genes important for myeloid and lymphoid lineages, such as CSF1R. Transcriptional activation from certain promoters, possibly containing low affinity binding sites, is achieved cooperatively with other transcription factors. FCER1A transactivation is achieved in cooperation with GATA1. May be particularly important for the pro- to pre-B cell transition. Binds (via the ETS domain) onto the purine-rich DNA core sequence 5'-GAGGAA-3', also known as the PU-box. In vitro can bind RNA and interfere with pre-mRNA splicing. The chain is Transcription factor PU.1 (SPI1) from Homo sapiens (Human).